The following is a 582-amino-acid chain: Potassium-transporting ATPase potassium-binding subunit (582 aa).

Helical transmembrane passes span 6 to 26 (LVQL…LGLY), 65 to 85 (IYAL…YVLE), 87 to 107 (LQGG…FVAV), 136 to 156 (GLAV…VALI), 178 to 198 (VLYI…WQGV), 277 to 297 (LEML…GVMI), 304 to 324 (LAIL…TLAA), 402 to 422 (GLYG…LMVG), 441 to 461 (ALVI…AAVI), 505 to 525 (IAGA…VLAL), and 546 to 566 (GGIF…LTFV).

The protein belongs to the KdpA family. In terms of assembly, the system is composed of three essential subunits: KdpA, KdpB and KdpC.

The protein resides in the cell inner membrane. Part of the high-affinity ATP-driven potassium transport (or Kdp) system, which catalyzes the hydrolysis of ATP coupled with the electrogenic transport of potassium into the cytoplasm. This subunit binds the periplasmic potassium ions and delivers the ions to the membrane domain of KdpB through an intramembrane tunnel. This Solidesulfovibrio magneticus (strain ATCC 700980 / DSM 13731 / RS-1) (Desulfovibrio magneticus) protein is Potassium-transporting ATPase potassium-binding subunit.